Here is a 179-residue protein sequence, read N- to C-terminus: UPF0398 protein SSU05_0416 (179 aa).

This sequence belongs to the UPF0398 family.

The chain is UPF0398 protein SSU05_0416 from Streptococcus suis (strain 05ZYH33).